The primary structure comprises 405 residues: Cytoplasmic tRNA 2-thiolation protein 2 (405 aa).

This sequence belongs to the CTU2/NCS2 family.

The protein resides in the cytoplasm. It functions in the pathway tRNA modification; 5-methoxycarbonylmethyl-2-thiouridine-tRNA biosynthesis. Functionally, plays a central role in 2-thiolation of mcm(5)S(2)U at tRNA wobble positions of tRNA(Lys), tRNA(Glu) and tRNA(Gln). May act by forming a heterodimer with NCS6/CTU1 that ligates sulfur from thiocarboxylated URM1 onto the uridine of tRNAs at wobble position. The protein is Cytoplasmic tRNA 2-thiolation protein 2 of Drosophila simulans (Fruit fly).